The sequence spans 353 residues: UPF0283 membrane protein Spro_2618 (353 aa).

Helical transmembrane passes span 71 to 91 (MVTA…VQWV), 101 to 121 (IAMG…GSVV), and 214 to 234 (ESTL…FIAW).

The protein belongs to the UPF0283 family.

It localises to the cell inner membrane. The chain is UPF0283 membrane protein Spro_2618 from Serratia proteamaculans (strain 568).